Consider the following 223-residue polypeptide: MSDHDSGNARRGRASFGAFVRKPVERGAPAGAAAEQGGLDAVQALPDDAVEVGAVVDAYGLKGWVKVATHADAGRGGDALLSARRWWLEKGTQRFSARIVQSKTHGDTVVAQPAGVGDRDAALALRGFRVFVRREDFPALAADEFYWVDLIGLDVVNEQSATLGKVVGMIDNGAHSIMRVEYPSVGKDGRPAAAERLIPFVGVYVKTVDQAARRIVVDWEADY.

A PRC barrel domain is found at 142–223; it reads ADEFYWVDLI…RIVVDWEADY (82 aa).

Belongs to the RimM family. Binds ribosomal protein uS19.

The protein resides in the cytoplasm. Functionally, an accessory protein needed during the final step in the assembly of 30S ribosomal subunit, possibly for assembly of the head region. Essential for efficient processing of 16S rRNA. May be needed both before and after RbfA during the maturation of 16S rRNA. It has affinity for free ribosomal 30S subunits but not for 70S ribosomes. This Burkholderia multivorans (strain ATCC 17616 / 249) protein is Ribosome maturation factor RimM.